Here is a 417-residue protein sequence, read N- to C-terminus: Blood group Rh(D) polypeptide (417 aa).

11 consecutive transmembrane segments (helical) span residues 12–32, 44–64, 77–97, 107–127, 130–150, 167–187, 203–223, 238–258, 287–307, 334–354, and 358–378; these read CLPLWALTLEAALILLFYFFT, LVASYQVGQDLTVMAAIGLGF, VAFNLFMLALGVQWAILLDGF, VITLFSIRLATMSALSVLISV, VLGKVNLAQLVVMVLVEVTAL, MNMMHIYVFAAYFGLSVAWCL, TIPSLSAMLGALFLWMFWPSF, VFNTYYAVAVSVVTAISGSSL, LIPSPWLAMVLGLVAGLISVG, LLGLLGEIIYIVLLVLDTVGA, and MIGFQVLLSIGELSLAIVIAL.

It belongs to the ammonium transporter (TC 2.A.49) family. Rh subfamily. In terms of processing, palmitoylated. As to expression, restricted to tissues or cell lines expressing erythroid characters.

The protein localises to the cell membrane. May be part of an oligomeric complex which is likely to have a transport or channel function in the erythrocyte membrane. The chain is Blood group Rh(D) polypeptide (RHD) from Homo sapiens (Human).